Reading from the N-terminus, the 257-residue chain is Flagellar brake protein YcgR 2 (257 aa).

The PilZ domain maps to 131–244 (QRREFFRVQT…AERTLQRVVT (114 aa)).

The protein belongs to the YcgR family. In terms of assembly, monomer. Interacts with the flagellar basal bodies.

The protein resides in the bacterial flagellum basal body. In terms of biological role, acts as a flagellar brake, regulating swimming and swarming in a bis-(3'-5') cyclic diguanylic acid (c-di-GMP)-dependent manner. Binds 1 c-di-GMP dimer per subunit. Increasing levels of c-di-GMP lead to decreased motility. The protein is Flagellar brake protein YcgR 2 of Paraburkholderia phytofirmans (strain DSM 17436 / LMG 22146 / PsJN) (Burkholderia phytofirmans).